We begin with the raw amino-acid sequence, 175 residues long: Large ribosomal subunit protein uL15 (175 aa).

2 disordered regions span residues 1–65 (MSTL…LPKF) and 155–175 (PESA…QPKA). Residues 12 to 21 (RSWHRKKRVG) are compositionally biased toward basic residues. Over residues 22-38 (RGQGSGLGKTAGRGGKG) the composition is skewed to gly residues. The span at 160 to 169 (KAHAGKGVKA) shows a compositional bias: low complexity.

It belongs to the universal ribosomal protein uL15 family. As to quaternary structure, part of the 50S ribosomal subunit.

Functionally, binds to the 23S rRNA. This is Large ribosomal subunit protein uL15 from Myxococcus xanthus (strain DK1622).